The primary structure comprises 452 residues: Pup--protein ligase (452 aa).

Glu-9 is a Mg(2+) binding site. Arg-53 is a binding site for ATP. Residue Tyr-55 coordinates Mg(2+). Asp-57 (proton acceptor) is an active-site residue. A Mg(2+)-binding site is contributed by Glu-63. ATP-binding residues include Thr-66 and Trp-419.

The protein belongs to the Pup ligase/Pup deamidase family. Pup-conjugating enzyme subfamily.

It catalyses the reaction ATP + [prokaryotic ubiquitin-like protein]-L-glutamate + [protein]-L-lysine = ADP + phosphate + N(6)-([prokaryotic ubiquitin-like protein]-gamma-L-glutamyl)-[protein]-L-lysine.. It functions in the pathway protein degradation; proteasomal Pup-dependent pathway. It participates in protein modification; protein pupylation. Its function is as follows. Catalyzes the covalent attachment of the prokaryotic ubiquitin-like protein modifier Pup to the proteasomal substrate proteins, thereby targeting them for proteasomal degradation. This tagging system is termed pupylation. The ligation reaction involves the side-chain carboxylate of the C-terminal glutamate of Pup and the side-chain amino group of a substrate lysine. The chain is Pup--protein ligase from Salinispora arenicola (strain CNS-205).